The sequence spans 108 residues: UPF0060 membrane protein KPK_2870 (108 aa).

The next 4 membrane-spanning stretches (helical) occupy residues 6–26, 29–49, 61–81, and 86–106; these read LLFF…WLWL, GATP…VWLL, AAYG…VDGV, and YDWA…AGWG.

It belongs to the UPF0060 family.

It is found in the cell inner membrane. The chain is UPF0060 membrane protein KPK_2870 from Klebsiella pneumoniae (strain 342).